The primary structure comprises 143 residues: Spanin, inner membrane subunit (143 aa).

The Cytoplasmic portion of the chain corresponds to 1-7 (MLEFLRK). The chain crosses the membrane as a helical; Signal-anchor for type II membrane protein span at residues 8-24 (LIPWVLAGMLFGLGWHL). Residues 25–143 (GSDSMDAKWK…QDTIRELQRK (119 aa)) lie on the Periplasmic side of the membrane.

Belongs to the T7likevirus i-spanin family. In terms of assembly, interacts (via C-terminus) with the spanin outer lipoprotein subunit (o-spanin) (via C-terminus). Part of the spanin complex which spans the entire periplasmic space. The spanin complex is composed of spanin inner membrane subunit and spanin outer membrane subunit.

The protein resides in the host cell inner membrane. In terms of biological role, component of the spanin complex that disrupts the host outer membrane and participates in cell lysis during virus exit. The spanin complex conducts the final step in host lysis by disrupting the outer membrane after holin and endolysin action have permeabilized the inner membrane and degraded the host peptidoglycans. Host outer membrane disruption is possibly due to local fusion between the inner and outer membrane performed by the spanin complex. The sequence is that of Spanin, inner membrane subunit from Escherichia coli (Bacteriophage T7).